The sequence spans 101 residues: Small ribosomal subunit protein uS14A (101 aa).

The disordered stretch occupies residues 47-66; the sequence is ALASLPRDSNPNRVTNRCAL.

It belongs to the universal ribosomal protein uS14 family. Part of the 30S ribosomal subunit. Contacts proteins S3 and S10.

Functionally, binds 16S rRNA, required for the assembly of 30S particles and may also be responsible for determining the conformation of the 16S rRNA at the A site. The sequence is that of Small ribosomal subunit protein uS14A from Myxococcus xanthus (strain DK1622).